The chain runs to 205 residues: Methylamine utilization protein MauD (205 aa).

The chain crosses the membrane as a helical span at residues Phe-5–Leu-25. Positions Pro-50–Ser-184 constitute a Thioredoxin domain.

It is found in the membrane. The protein operates within one-carbon metabolism; methylamine degradation. May be specifically involved in the processing, transport, and/or maturation of the MADH beta-subunit. The protein is Methylamine utilization protein MauD (mauD) of Methylorubrum extorquens (strain ATCC 14718 / DSM 1338 / JCM 2805 / NCIMB 9133 / AM1) (Methylobacterium extorquens).